Reading from the N-terminus, the 484-residue chain is uncharacterized protein (484 aa).

One can recognise an N-acetyltransferase domain in the interval 334-484 (IIIRQITDND…ENEWIYEVNL (151 aa)).

This is an uncharacterized protein from Methanocaldococcus jannaschii (strain ATCC 43067 / DSM 2661 / JAL-1 / JCM 10045 / NBRC 100440) (Methanococcus jannaschii).